The primary structure comprises 340 residues: KRR1 small subunit processome component homolog (340 aa).

The 69-residue stretch at 124-192 (DIIKIGNLVH…VRDIVLETMN (69 aa)) folds into the KH domain. The segment covering 228–244 (KNKNISKRKQPKSKKPK) has biased composition (basic residues). Disordered regions lie at residues 228-259 (KNKN…ESKI) and 271-324 (NQEQ…KVDV). Positions 269–302 (FLNQEQKQAKRNQERSAKQADAAKKQDERRNKDF) form a coiled coil. 2 stretches are compositionally biased toward basic and acidic residues: residues 275–301 (KQAK…RNKD) and 309–324 (APSR…KVDV).

This sequence belongs to the KRR1 family. In terms of assembly, monomer. Component of the ribosomal small subunit (SSU) processome.

The protein resides in the nucleus. It is found in the nucleolus. Required for 40S ribosome biogenesis. Involved in nucleolar processing of pre-18S ribosomal RNA and ribosome assembly. Binds to RNA. Required for female germline development, cell viability during eye development and for survival of dividing cells and epithelial cells during early wing disk development. In Drosophila persimilis (Fruit fly), this protein is KRR1 small subunit processome component homolog.